Reading from the N-terminus, the 455-residue chain is Ribulose bisphosphate carboxylase large chain (455 aa).

N6,N6,N6-trimethyllysine is present on Lys-5. The substrate site is built by Asn-114 and Thr-164. The active-site Proton acceptor is Lys-166. Substrate is bound at residue Lys-168. Mg(2+) is bound by residues Lys-192, Asp-194, and Glu-195. Lys-192 is modified (N6-carboxylysine). The Proton acceptor role is filled by His-285. The substrate site is built by Arg-286, His-318, and Ser-370.

It belongs to the RuBisCO large chain family. Type I subfamily. Heterohexadecamer of 8 large chains and 8 small chains; disulfide-linked. The disulfide link is formed within the large subunit homodimers. Mg(2+) is required as a cofactor. Post-translationally, the disulfide bond which can form in the large chain dimeric partners within the hexadecamer appears to be associated with oxidative stress and protein turnover.

It localises to the plastid. The protein localises to the chloroplast. It catalyses the reaction 2 (2R)-3-phosphoglycerate + 2 H(+) = D-ribulose 1,5-bisphosphate + CO2 + H2O. It carries out the reaction D-ribulose 1,5-bisphosphate + O2 = 2-phosphoglycolate + (2R)-3-phosphoglycerate + 2 H(+). In terms of biological role, ruBisCO catalyzes two reactions: the carboxylation of D-ribulose 1,5-bisphosphate, the primary event in carbon dioxide fixation, as well as the oxidative fragmentation of the pentose substrate in the photorespiration process. Both reactions occur simultaneously and in competition at the same active site. This chain is Ribulose bisphosphate carboxylase large chain, found in Lupinus paraguariensis (Lupine).